Here is a 554-residue protein sequence, read N- to C-terminus: MGAQVIAAASNGLCHDDEPIASVKSRITRSGRKLWYSLRVVQEPLRARACGSGPKSSADRRPVDPPPVVELRIFEGESFEMAQERDVTFQYNANFFLYATLEHARVMAQGRLQTPSANTPPVLTGMPVSGMAYLDRPKLAGYFLFPDLSVRHEGRYKLTFNLYEETKEDKDKDPEEPNAPPDGSPGSFDFRMDIKSHDFVVYSAKKFPGLTESTPLSRTVAEQGCRVRIRRDVRMRRRDGKGNSGGNDYENGEEEYRRARRTATPDTAKQEAYRQRSMSGSTERTPYSSISDPQRRPSMADYPPQYAAQTPTSGGHLGFLGGNTHHQYPAQPPPQSFAQPHSVPPSPVYPTSQRAPYQHQPSSYPPPPPPHQPIFQSEHHTSRTYAPINPASRHDSIHQSTKQYTLPPLSEAVSPTQPHHQHPSIAPHRLPVTALPPLQVDRFSSASHNQHPMVSPSNMAAPPYPRAYSVSNSGGLTSAGGYNQLPPPPPPPPQVAGSKRAHDQTFRADPEMRRYQDGARERESVDDKEPPLCTFKYRRADGSVECKQADIGGY.

A Velvet domain is found at 31–230; that stretch reads GRKLWYSLRV…AEQGCRVRIR (200 aa). The Nuclear localization signal motif lies at 45-50; it reads LRARAC. The segment covering 166 to 175 has biased composition (basic and acidic residues); the sequence is TKEDKDKDPE. Disordered stretches follow at residues 166–190, 232–430, and 465–528; these read TKEDKDKDPEEPNAPPDGSPGSFDF, DVRM…PHRL, and PRAY…VDDK. A compositionally biased stretch (polar residues) spans 276 to 292; it reads RSMSGSTERTPYSSISD. Composition is skewed to pro residues over residues 363 to 372 and 485 to 494; these read SYPPPPPPHQ and LPPPPPPPPQ. The interval 455–487 is PEST; the sequence is SPSNMAAPPYPRAYSVSNSGGLTSAGGYNQLPP. Basic and acidic residues predominate over residues 500–528; the sequence is RAHDQTFRADPEMRRYQDGARERESVDDK.

It belongs to the velvet family. VeA subfamily. As to quaternary structure, component of the heterotrimeric velvet complex composed of lae-1, ve-1 and vel-2; Ve-1 acting as a bridging protein between lae-1 and vel-2.

The protein localises to the nucleus. The protein resides in the cytoplasm. Functionally, component of the velvet transcription factor complex that controls sexual/asexual developmental ratio in response to light, promoting sexual development in the darkness while stimulating asexual sporulation under illumination. The velvet complex hat acts as a global regulator for secondary metabolite gene expression. The polypeptide is Developmental and secondary metabolism regulator ve-1 (Neurospora crassa (strain ATCC 24698 / 74-OR23-1A / CBS 708.71 / DSM 1257 / FGSC 987)).